Reading from the N-terminus, the 1037-residue chain is MERARRLANKAILGRLVSQTKHNPSISSPALCSPSRYVSSLSPYVCSGTNVRSDRNLNGFGSQVRTISVEALKPSDTFPRRHNSATPEEQTKMAEFVGFPNLDSLIDATVPKSIRLDSMKYSKFDEGLTESQMIAHMQDLASKNKIFKSFIGMGYYNTSVPTVILRNIMENPGWYTQYTPYQAEIAQGRLESLLNFQTMVTDLTGLPMSNASLLDEGTAAAEAMAMCNNIQKGKKKTFIIASNCHPQTIDICKTRADGFDLKVVTSDLKDFDYSSGDVCGVLVQYPGTEGELLDYSEFIKNAHANGVKVVMASDLLALTILKPPGELGADIVVGSAQRFGVPMGYGGPHAAFLATSQEYKRMMPGRIIGVSVDSSGKPALRMAMQTREQHIRRDKATSNICTAQALLANMAAMFGVYHGPEGLKTIAKRVHGLAGTFAAGLKKLGTVQVQDLPFFDTVKVTCVDSKAIAEEAYKHKMNLRIVDKNTITVAFDETTTIEDVDTLFKVFALGKPVTFTAASIAPEVQDAIPSGLVRETPYLTHPIFNMYHTEHELLRYISKLQSKDLSLCHSMIPLGSCTMKLNATTEMMPVTWPAFADIHPFAPTEQAQGYQEMFKNLGDLLCTITGFDSFSLQPNAGAAGEYAGLMVIRAYHMARGDHHRNVCIIPVSAHGTNPASAAMCGMKIITVGTDSKGNINIEELRKAAEANKENLSALMVTYPSTHGVYEEGIDEICKIIHDNGGQVYMDGANMNAQVGLTSPGWIGADVCHLNLHKTFCIPHGGGGPGMGPIGVKKHLAPYLPSHPVVATGGIPAPEQSQPLGTIAAAPWGSALILPISYTYIAMMGSQGITNASKIAILNANYMAKRLENHYPILFRGVNGTVAHEFIVDLRPLKTTAGIEPEDVAKRLIDYGFHGPTMSWPVPGTLMIEPTESESKAELDRFCDALISIRQEIAEIEKGNVDLNNNVIKGAPHPPQLLMADKWTKPYSREYAAYPAPWLRAAKFWPTTCRVDNVYGDRNLICTLQPPQEYEEKAEATA.

The N-terminal 66 residues, 1–66, are a transit peptide targeting the mitochondrion; sequence MERARRLANK…LNGFGSQVRT (66 aa). K773 carries the post-translational modification N6-(pyridoxal phosphate)lysine.

Belongs to the GcvP family. Homodimer. The glycine cleavage system is composed of four proteins: P, T, L and H. Requires pyridoxal 5'-phosphate as cofactor. Expressed in leaves, stems and roots.

The protein resides in the mitochondrion. The catalysed reaction is N(6)-[(R)-lipoyl]-L-lysyl-[glycine-cleavage complex H protein] + glycine + H(+) = N(6)-[(R)-S(8)-aminomethyldihydrolipoyl]-L-lysyl-[glycine-cleavage complex H protein] + CO2. Its function is as follows. The glycine cleavage system catalyzes the degradation of glycine. The P protein binds the alpha-amino group of glycine through its pyridoxal phosphate cofactor; CO(2) is released and the remaining methylamine moiety is then transferred to the lipoamide cofactor of the H protein. The chain is Glycine dehydrogenase (decarboxylating) A, mitochondrial (GDCSPA) from Flaveria pringlei.